The sequence spans 204 residues: Histone H3-like centromeric protein CSE4 (204 aa).

The disordered stretch occupies residues Arg68 to Tyr107. Basic and acidic residues predominate over residues Ser77–Arg99. Positions Ala89 to Gln202 are H3-like.

This sequence belongs to the histone H3 family. In terms of assembly, component of centromeric nucleosomes, where DNA is wrapped around a histone octamer core. The octamer contains two molecules each of H2A, H2B, CSE4/CENPA and H4 assembled in one CSE4-H4 heterotetramer and two H2A-H2B heterodimers. Interacts with the inner kinetochore. Ubiquitinated. Is degraded through ubiquitin-mediated proteolysis when not protected by its association to the kinetochore.

It is found in the nucleus. The protein resides in the chromosome. Its subcellular location is the centromere. Histone H3-like nucleosomal protein that is specifically found in centromeric nucleosomes. Replaces conventional H3 in the nucleosome core of centromeric chromatin that serves as an assembly site for the inner kinetochore. Required for recruitment and assembly of kinetochore proteins, mitotic progression and chromosome segregation. May serve as an epigenetic mark that propagates centromere identity through replication and cell division. The chain is Histone H3-like centromeric protein CSE4 (CSE4) from Eremothecium gossypii (strain ATCC 10895 / CBS 109.51 / FGSC 9923 / NRRL Y-1056) (Yeast).